Here is a 342-residue protein sequence, read N- to C-terminus: N-acetyl-gamma-glutamyl-phosphate reductase (342 aa).

The active site involves C149.

The protein belongs to the NAGSA dehydrogenase family. Type 1 subfamily.

It is found in the cytoplasm. It catalyses the reaction N-acetyl-L-glutamate 5-semialdehyde + phosphate + NADP(+) = N-acetyl-L-glutamyl 5-phosphate + NADPH + H(+). The protein operates within amino-acid biosynthesis; L-arginine biosynthesis; N(2)-acetyl-L-ornithine from L-glutamate: step 3/4. In terms of biological role, catalyzes the NADPH-dependent reduction of N-acetyl-5-glutamyl phosphate to yield N-acetyl-L-glutamate 5-semialdehyde. The sequence is that of N-acetyl-gamma-glutamyl-phosphate reductase from Laribacter hongkongensis (strain HLHK9).